A 480-amino-acid polypeptide reads, in one-letter code: Putative auxin transporter-like protein 4 (480 aa).

Over 1-66 (MASEKVETIV…DAWFSCASNQ (66 aa)) the chain is Cytoplasmic. Residues 67–84 (VAQVLLTLPYSFSQLGMA) traverse the membrane as a helical segment. Residues 85–86 (SG) lie on the Extracellular side of the membrane. Residues 87 to 107 (VAFQVFYGLMGSWTAYLISVL) traverse the membrane as a helical segment. Topologically, residues 108–143 (YVEYRTRRERDKVDFRNHVIQWFEVLDGLLGRHWRN) are cytoplasmic. Residues 144–164 (AGLLFNCTFLLFGSVIQLIAC) form a helical membrane-spanning segment. Topologically, residues 165–179 (ASNIYYINDRLDKRT) are extracellular. Residues 180–200 (WTYIFGACCATTVFVPSFHNY) traverse the membrane as a helical segment. Residues 201-203 (RVW) are Cytoplasmic-facing. Residues 204 to 224 (SFLGLLMTSYTAWYLTVAAVV) form a helical membrane-spanning segment. At 225-241 (HGKVDGAAPRAGPSKTM) the chain is on the extracellular side. The helical transmembrane segment at 242–262 (VLYFTGATNILYTFGGHAVTV) threads the bilayer. At 263–275 (EIMHAMWRPRRFK) the chain is on the cytoplasmic side. The chain crosses the membrane as a helical span at residues 276-296 (MIYLAATAYVLTLTLPSAAAM). Residues 297–323 (YWAFGDALLDHSNAFALLPRTPWRDAA) lie on the Extracellular side of the membrane. Residues 324-344 (VVLMLIHQFITFGFACTPLYF) traverse the membrane as a helical segment. Over 345 to 365 (VWEKAIGVHGGAGVLRRAAAR) the chain is Cytoplasmic. Residues 366–386 (LPVVLPIWFLAVIFPFFGPIN) traverse the membrane as a helical segment. A topological domain (extracellular) is located at residue serine 387. Residues 388-408 (TVGSFLVSFTVYIIPAMAHMA) traverse the membrane as a helical segment. Residues 409–433 (TFAPAAARENAVEPPPRALGGWPGT) are Cytoplasmic-facing. A helical membrane pass occupies residues 434–454 (FAANCFVVAWVLVVGFGFGGW). At 455-480 (ASTVNFVRQVDTFGLFTKCYQCPPRH) the chain is on the extracellular side.

Belongs to the amino acid/polyamine transporter 2 family. Amino acid/auxin permease (AAAP) (TC 2.A.18.1) subfamily.

It is found in the cell membrane. Functionally, carrier protein involved in proton-driven auxin influx. May mediate the formation of auxin gradient from developing leaves (site of auxin biosynthesis) to tips. This Oryza sativa subsp. japonica (Rice) protein is Putative auxin transporter-like protein 4.